Reading from the N-terminus, the 125-residue chain is Phosphoribosyl-AMP cyclohydrolase (125 aa).

Asp74 lines the Mg(2+) pocket. Cys75 lines the Zn(2+) pocket. Mg(2+)-binding residues include Asp76 and Asp78. Cys92 and Cys99 together coordinate Zn(2+).

Belongs to the PRA-CH family. Homodimer. It depends on Mg(2+) as a cofactor. The cofactor is Zn(2+).

Its subcellular location is the cytoplasm. It carries out the reaction 1-(5-phospho-beta-D-ribosyl)-5'-AMP + H2O = 1-(5-phospho-beta-D-ribosyl)-5-[(5-phospho-beta-D-ribosylamino)methylideneamino]imidazole-4-carboxamide. The protein operates within amino-acid biosynthesis; L-histidine biosynthesis; L-histidine from 5-phospho-alpha-D-ribose 1-diphosphate: step 3/9. Catalyzes the hydrolysis of the adenine ring of phosphoribosyl-AMP. This Pelobacter propionicus (strain DSM 2379 / NBRC 103807 / OttBd1) protein is Phosphoribosyl-AMP cyclohydrolase.